The chain runs to 762 residues: Cellulose synthase-like protein H2 (762 aa).

Over residues 1–15 the composition is skewed to low complexity; that stretch reads MAVVAAAAATGSTTR. The disordered stretch occupies residues 1–39; that stretch reads MAVVAAAAATGSTTRSGGGGGEGTRSGRKKPPPPPLQER. Transmembrane regions (helical) follow at residues 47–67 and 81–101; these read AWAWRLAGLAVLLLLLALLAL and GVWRVALVCEAWFAALCALNV. Active-site residues include Asp-180 and Asp-470. The next 6 helical transmembrane spans lie at 541–561, 582–602, 619–639, 673–693, 708–728, and 739–759; these read LAYLIVLGWPLRAPFELCYGL, FSVPLALFISYNTYNFMEYMA, IISVSAWTLAFLTVLLKSLGL, LPVFIPVTALAMLNIVAVTVG, APGIGEFMCCGWLVLCFFPFV, and GIPWSVKLKASLLVAMFVTFC.

It belongs to the glycosyltransferase 2 family. Plant cellulose synthase-like H subfamily.

The protein localises to the golgi apparatus membrane. In terms of biological role, thought to be a Golgi-localized beta-glycan synthase that polymerize the backbones of noncellulosic polysaccharides (hemicelluloses) of plant cell wall. In Oryza sativa subsp. japonica (Rice), this protein is Cellulose synthase-like protein H2 (CSLH2).